A 508-amino-acid chain; its full sequence is Histidine--tRNA ligase, cytoplasmic (508 aa).

Positions 3–59 (SPALEELVLNSRHRLVRGLKQQKASADQIEEEVAKLLKLKAQLGHDESKQKFVLKTP) constitute a WHEP-TRS domain. Ser-66 bears the Phosphoserine mark. L-histidine is bound by residues 130–132 (DLT), Arg-157, Asp-177, Arg-326, and 330–331 (YY).

The protein belongs to the class-II aminoacyl-tRNA synthetase family. Homodimer.

It is found in the cytoplasm. It carries out the reaction tRNA(His) + L-histidine + ATP = L-histidyl-tRNA(His) + AMP + diphosphate + H(+). Its function is as follows. Catalyzes the ATP-dependent ligation of histidine to the 3'-end of its cognate tRNA, via the formation of an aminoacyl-adenylate intermediate (His-AMP). Plays a role in axon guidance. This is Histidine--tRNA ligase, cytoplasmic (HARS1) from Mesocricetus auratus (Golden hamster).